Reading from the N-terminus, the 434-residue chain is ATP-sensitive inward rectifier potassium channel 14 (434 aa).

Residues 1–81 (MGLARALRRL…LSDLFTTCVD (81 aa)) are Cytoplasmic-facing. S-nitrosocysteine is present on Cys-79. A helical transmembrane segment spans residues 82-108 (VRWRWMCLLFSCSFLASWLLFGLTFWL). Residues 109 to 131 (IASLHGDLAAPPPPAPCFSQVAS) lie on the Extracellular side of the membrane. The segment at residues 132–148 (FLAAFLFALETQTSIGY) is an intramembrane region (helical; Pore-forming). The Selectivity filter signature appears at 145-150 (SIGYGV). Topologically, residues 149-157 (GVRSVTEEC) are extracellular. Residues 158 to 185 (PAAVAAVVLQCIAGCVLDAFVVGAVMAK) form a helical membrane-spanning segment. Residues 186–434 (MAKPKKRNET…TPTLALTLPP (249 aa)) are Cytoplasmic-facing. The disordered stretch occupies residues 398-434 (QEEDEEEDTKEGTSAETPERAASPQALTPTLALTLPP). Basic and acidic residues predominate over residues 407 to 416 (KEGTSAETPE). Low complexity predominate over residues 418-434 (AASPQALTPTLALTLPP).

The protein belongs to the inward rectifier-type potassium channel (TC 1.A.2.1) family. KCNJ14 subfamily.

Its subcellular location is the membrane. It carries out the reaction K(+)(in) = K(+)(out). With respect to regulation, channel activity is regulated by variations of cytosolic pH; channels are activated by alkaline and inhibited by acidic pH values. Inhibited by Ba(2+) and Cs(+) in a voltage-dependent manner; sensitivity to those inhibitors is lower than in other Kir channels. In terms of biological role, inward rectifier potassium channels are characterized by a greater tendency to allow potassium to flow into the cell rather than out of it. Their voltage dependence is regulated by the concentration of extracellular potassium; as external potassium is raised, the voltage range of the channel opening shifts to more positive voltages. The chain is ATP-sensitive inward rectifier potassium channel 14 (Kcnj14) from Mus musculus (Mouse).